Reading from the N-terminus, the 142-residue chain is Small ribosomal subunit protein uS12 (142 aa).

The disordered stretch occupies residues 1-44 (MTNGKYAARKLKKDRQQRRWSDSEYARRERGLGKKSDPLEGAPQ). Over residues 7–16 (AARKLKKDRQ) the composition is skewed to basic residues. Residues 17 to 38 (QRRWSDSEYARRERGLGKKSDP) are compositionally biased toward basic and acidic residues.

Belongs to the universal ribosomal protein uS12 family. As to quaternary structure, part of the 30S ribosomal subunit.

Its function is as follows. With S4 and S5 plays an important role in translational accuracy. Located at the interface of the 30S and 50S subunits. The protein is Small ribosomal subunit protein uS12 of Halobacterium salinarum (strain ATCC 29341 / DSM 671 / R1).